The primary structure comprises 374 residues: Pectate lyase 3 (374 aa).

The N-terminal stretch at 1 to 22 is a signal peptide; sequence MKYLLPSAAAGLLLLAAQPTMA. A disulfide bridge links C93 with C176. Ca(2+) is bound by residues D150, D152, E187, and D191. R239 is a catalytic residue. A disulfide bridge links C350 with C373.

The protein belongs to the polysaccharide lyase 1 family. PLADES subfamily. Ca(2+) is required as a cofactor.

Its subcellular location is the secreted. It catalyses the reaction Eliminative cleavage of (1-&gt;4)-alpha-D-galacturonan to give oligosaccharides with 4-deoxy-alpha-D-galact-4-enuronosyl groups at their non-reducing ends.. The protein operates within glycan metabolism; pectin degradation; 2-dehydro-3-deoxy-D-gluconate from pectin: step 2/5. Functionally, involved in maceration and soft-rotting of plant tissue. This chain is Pectate lyase 3 (pel3), found in Pectobacterium carotovorum (Erwinia carotovora).